Here is a 574-residue protein sequence, read N- to C-terminus: Glycine--tRNA ligase (574 aa).

The substrate site is built by Arg-96 and Glu-162. ATP contacts are provided by residues 194–196, 204–209, 327–328, and 450–453; these read RNE, IRLREF, EC, and GIDR. Residue 209–213 participates in substrate binding; the sequence is FTQAE. 446 to 450 contacts substrate; the sequence is EPSYG.

It belongs to the class-II aminoacyl-tRNA synthetase family.

The protein localises to the cytoplasm. It catalyses the reaction tRNA(Gly) + glycine + ATP = glycyl-tRNA(Gly) + AMP + diphosphate. In terms of biological role, catalyzes the attachment of glycine to tRNA(Gly). This is Glycine--tRNA ligase from Methanococcus maripaludis (strain C6 / ATCC BAA-1332).